The sequence spans 647 residues: Putative lipase YDL109C (647 aa).

Catalysis depends on Ser-274, which acts as the Charge relay system. The disordered stretch occupies residues 502–523 (PPPSPTLYEGTAAKEGETRKTR). Residues 513–523 (AAKEGETRKTR) show a composition bias toward basic and acidic residues.

Belongs to the putative lipase ROG1 family.

Involved in lipid metabolism. This is Putative lipase YDL109C from Saccharomyces cerevisiae (strain ATCC 204508 / S288c) (Baker's yeast).